Reading from the N-terminus, the 132-residue chain is MFAYRALVGWAPQSLIYFTTLLVDDKSLLCLVDGIQVFVYWAWPSQTMQSFSRTQFDSVGRSSLCARNAMLAFKLFEVHRRGYKPDTALCNWGGGGSRTLAATSISGSNQIRITMLWSGPGIGAWPKYKTRC.

This is an uncharacterized protein from Gallus gallus (Chicken).